We begin with the raw amino-acid sequence, 1679 residues long: GRIP and coiled-coil domain-containing protein 2 (1679 aa).

Met1 is modified (N-acetylmethionine). Disordered regions lie at residues 1-23 (MEDS…KLET) and 1466-1522 (LKSE…SAGT). Positions 35–1469 (KQMMLLQKAK…ETQLFQLKSE (1435 aa)) form a coiled coil. Phosphoserine is present on residues Ser1474 and Ser1478. A compositionally biased stretch (polar residues) spans 1474 to 1483 (SPASSHQPSK). A mediates interaction with RAB6A region spans residues 1569-1608 (HLNGLLRETEATNAILMEQIKLLKSEIRRLERNQEREKSV). Residues 1569–1679 (HLNGLLRETE…SYLHSWSGLR (111 aa)) are mediates interaction with RAB9A. Residues 1604–1654 (REKSVANLEYLKNVLLRFIFLKPGSERERLLPVIDTMLQLSPEEKGKLATV) form the GRIP domain.

Homodimer. Interacts (via GRIP domain) with RAB6A (preferentially in its GTP-bound form). May interact (RAB6A-dependent) with ARL1; might be involved in GCC2 Golgi localization. Interacts with CLASP1 and CLASP2; recruits both proteins to membranes of the TGN. Interacts with STX16. Interacts (probably via GRIP domain) with RAB9A (preferentially in its GTP-bound form).

It is found in the cytoplasm. It localises to the golgi apparatus. The protein localises to the trans-Golgi network membrane. Its function is as follows. Golgin which probably tethers transport vesicles to the trans-Golgi network (TGN) and regulates vesicular transport between the endosomes and the Golgi. As a RAB9A effector it is involved in recycling of the mannose 6-phosphate receptor from the late endosomes to the TGN. May also play a role in transport between the recycling endosomes and the Golgi. Required for maintenance of the Golgi structure, it is involved in the biogenesis of noncentrosomal, Golgi-associated microtubules through recruitment of CLASP1 and CLASP2. This chain is GRIP and coiled-coil domain-containing protein 2 (Gcc2), found in Rattus norvegicus (Rat).